Here is a 353-residue protein sequence, read N- to C-terminus: Pupal cuticle protein PCP52 (353 aa).

Positions 1–15 (MRVLILSAFIACATA) are cleaved as a signal peptide. The disordered stretch occupies residues 166-195 (AEAPEGNKDEGNKDSVQVESSATESESDKA). Over residues 179–189 (DSVQVESSATE) the composition is skewed to polar residues.

Component of the cuticle of the pupa of Galleria mellonella. This is Pupal cuticle protein PCP52 (PCP52) from Galleria mellonella (Greater wax moth).